The following is a 315-amino-acid chain: Lipoyl synthase (315 aa).

Residues cysteine 62, cysteine 67, cysteine 73, cysteine 88, cysteine 92, cysteine 95, and serine 302 each coordinate [4Fe-4S] cluster. In terms of domain architecture, Radical SAM core spans phenylalanine 74–arginine 291.

This sequence belongs to the radical SAM superfamily. Lipoyl synthase family. The cofactor is [4Fe-4S] cluster.

The protein resides in the cytoplasm. It carries out the reaction [[Fe-S] cluster scaffold protein carrying a second [4Fe-4S](2+) cluster] + N(6)-octanoyl-L-lysyl-[protein] + 2 oxidized [2Fe-2S]-[ferredoxin] + 2 S-adenosyl-L-methionine + 4 H(+) = [[Fe-S] cluster scaffold protein] + N(6)-[(R)-dihydrolipoyl]-L-lysyl-[protein] + 4 Fe(3+) + 2 hydrogen sulfide + 2 5'-deoxyadenosine + 2 L-methionine + 2 reduced [2Fe-2S]-[ferredoxin]. Its pathway is protein modification; protein lipoylation via endogenous pathway; protein N(6)-(lipoyl)lysine from octanoyl-[acyl-carrier-protein]: step 2/2. Functionally, catalyzes the radical-mediated insertion of two sulfur atoms into the C-6 and C-8 positions of the octanoyl moiety bound to the lipoyl domains of lipoate-dependent enzymes, thereby converting the octanoylated domains into lipoylated derivatives. The sequence is that of Lipoyl synthase from Azoarcus sp. (strain BH72).